A 263-amino-acid polypeptide reads, in one-letter code: Uridylate kinase (263 aa).

Residue 29–32 (KVSG) participates in ATP binding. Gly71 is a UMP binding site. ATP is bound by residues Gly72 and Arg76. Residues Asp91 and 152–159 (TGNPFFTT) contribute to the UMP site. The ATP site is built by Thr179, Gln180, Tyr185, and Asp188.

This sequence belongs to the UMP kinase family. As to quaternary structure, homohexamer.

It is found in the cytoplasm. It catalyses the reaction UMP + ATP = UDP + ADP. Its pathway is pyrimidine metabolism; CTP biosynthesis via de novo pathway; UDP from UMP (UMPK route): step 1/1. Inhibited by UTP. Catalyzes the reversible phosphorylation of UMP to UDP. The protein is Uridylate kinase of Maricaulis maris (strain MCS10) (Caulobacter maris).